A 321-amino-acid chain; its full sequence is Probable pectate lyase A (321 aa).

The signal sequence occupies residues 1 to 18 (MKFVATLIACGLSGLALA). A glycan (N-linked (GlcNAc...) asparagine) is linked at N93. Positions 134, 163, and 167 each coordinate Ca(2+). R220 is a catalytic residue. Residue N238 is glycosylated (N-linked (GlcNAc...) asparagine).

This sequence belongs to the polysaccharide lyase 1 family. It depends on Ca(2+) as a cofactor.

The protein localises to the secreted. It catalyses the reaction Eliminative cleavage of (1-&gt;4)-alpha-D-galacturonan to give oligosaccharides with 4-deoxy-alpha-D-galact-4-enuronosyl groups at their non-reducing ends.. Pectinolytic enzyme consist of four classes of enzymes: pectin lyase, polygalacturonase, pectin methylesterase and rhamnogalacturonase. Among pectinolytic enzymes, pectin lyase is the most important in depolymerization of pectin, since it cleaves internal glycosidic bonds of highly methylated pectins. Favors pectate, the anion, over pectin, the methyl ester. In Aspergillus fumigatus (strain CBS 144.89 / FGSC A1163 / CEA10) (Neosartorya fumigata), this protein is Probable pectate lyase A (plyA).